Consider the following 400-residue polypeptide: Putative F-box protein At5g41510 (400 aa).

Residues 2 to 47 (ATMISNLPRDLIEEIFSRVPLTSMKAVRLTCKSWNNLSKSESFTKV) enclose the F-box domain.

The protein is Putative F-box protein At5g41510 of Arabidopsis thaliana (Mouse-ear cress).